A 435-amino-acid chain; its full sequence is 3-phosphoshikimate 1-carboxyvinyltransferase (435 aa).

Lys-22, Ser-23, and Arg-27 together coordinate 3-phosphoshikimate. Lys-22 is a phosphoenolpyruvate binding site. Gly-95 and Arg-123 together coordinate phosphoenolpyruvate. 3-phosphoshikimate is bound by residues Ser-168, Gln-170, Asp-319, and Lys-346. Gln-170 serves as a coordination point for phosphoenolpyruvate. Asp-319 acts as the Proton acceptor in catalysis. Positions 350 and 393 each coordinate phosphoenolpyruvate.

The protein belongs to the EPSP synthase family. Monomer.

It localises to the cytoplasm. The catalysed reaction is 3-phosphoshikimate + phosphoenolpyruvate = 5-O-(1-carboxyvinyl)-3-phosphoshikimate + phosphate. It participates in metabolic intermediate biosynthesis; chorismate biosynthesis; chorismate from D-erythrose 4-phosphate and phosphoenolpyruvate: step 6/7. Functionally, catalyzes the transfer of the enolpyruvyl moiety of phosphoenolpyruvate (PEP) to the 5-hydroxyl of shikimate-3-phosphate (S3P) to produce enolpyruvyl shikimate-3-phosphate and inorganic phosphate. The protein is 3-phosphoshikimate 1-carboxyvinyltransferase of Chloroflexus aggregans (strain MD-66 / DSM 9485).